We begin with the raw amino-acid sequence, 108 residues long: Large ribosomal subunit protein bL21 (108 aa).

The protein belongs to the bacterial ribosomal protein bL21 family. As to quaternary structure, part of the 50S ribosomal subunit. Contacts protein L20.

Functionally, this protein binds to 23S rRNA in the presence of protein L20. The chain is Large ribosomal subunit protein bL21 from Buchnera aphidicola subsp. Acyrthosiphon pisum (strain 5A).